Consider the following 580-residue polypeptide: MSTASLRKRTGSLTILGASALTSLLLAMPAFAGEVYLDGLATAQTHQKFIVTYKDGSTALASPSALTTSLRTAARAVPAKAGKALGLNSVRRLALGPELVRADRALDRAEAETLMRQLAADPNVQSVEVDQILHATLTPNDTRLSEQWAFGTTNAGLNIRPAWDKATGSGTVVAVIDTGITSHADLNANILAGYDFISDATTARDGNGRDSNAADEGDWYAANECGAGIPAASSSWHGTHVAGTVAAVTNNTTGVAGTAYGAKVVPVRVLGKCGGSLSDIADAIVWASGGTVSGIPANANPAEVINMSLGGGGSCSTTMQNAINGAVSRGTTVVVAAGNDASNVSGSLPANCANVIAVAATTSAGAKASYSNFGTGIDVSAPGSSILSTLNSGTTTPGSASYASYNGTSMASPHVAGVVALVQSVAPTALTPAAVETLLKNTARALPGACSGGCGAGIVNADAAVTAAINGGSGGGGGGGNTLTNGTPVTGLGAATGAELNYTITVPAGSGTLTVTTSGGSGDADLYVRAGSAPTDSAYTCRPYRSGNAETCTITAPSGTYYVRLKAYSTFSGVTLRASY.

The signal sequence occupies residues 1 to 32; sequence MSTASLRKRTGSLTILGASALTSLLLAMPAFA. A propeptide spanning residues 33–136 is cleaved from the precursor; the sequence is GEVYLDGLAT…VEVDQILHAT (104 aa). One can recognise a Peptidase S8 domain in the interval 147–465; that stretch reads QWAFGTTNAG…AGIVNADAAV (319 aa). Catalysis depends on charge relay system residues Asp177 and His237. 2 disulfide bridges follow: Cys225–Cys273 and Cys315–Cys352. Ser409 acts as the Charge relay system in catalysis. Cys450 and Cys454 form a disulfide bridge.

Belongs to the peptidase S8 family.

The protein localises to the secreted. This chain is Extracellular protease, found in Xanthomonas campestris pv. campestris (strain ATCC 33913 / DSM 3586 / NCPPB 528 / LMG 568 / P 25).